We begin with the raw amino-acid sequence, 138 residues long: Acidic phospholipase A2 daboiatoxin A chain (138 aa).

The signal sequence occupies residues 1–16 (MRTLWIMAVCLIGVEG). Disulfide bonds link Cys-42–Cys-131, Cys-44–Cys-60, Cys-59–Cys-111, Cys-65–Cys-138, Cys-66–Cys-104, Cys-73–Cys-97, and Cys-91–Cys-102. 3 residues coordinate Ca(2+): Tyr-43, Gly-45, and Gly-47. His-63 is a catalytic residue. Asp-64 is a Ca(2+) binding site. The active site involves Asp-105.

It belongs to the phospholipase A2 family. Group II subfamily. D49 sub-subfamily. As to quaternary structure, heterodimer of A and B chain; non-covalently linked. The acidic protein (B chain) has phospholipase A2 activity and the A chain weakly inhibits the B chain enzymatic activity but potentiates its lethal potency. The cofactor is Ca(2+). Expressed by the venom gland.

Its subcellular location is the secreted. The enzyme catalyses a 1,2-diacyl-sn-glycero-3-phosphocholine + H2O = a 1-acyl-sn-glycero-3-phosphocholine + a fatty acid + H(+). In terms of biological role, heterodimer (A and B chains): phospholipase A2 that acts as a presynaptic neurotoxin and shows a PLA2 activity of 1377 umol/min/mg. In vivo, induces edema and produces neurotoxic symptoms in mice. Also exhibits indirect hemolysis, a strong myonecrotic activity and cytotoxicity. PLA2 catalyzes the calcium-dependent hydrolysis of the 2-acyl groups in 3-sn-phosphoglycerides. Its function is as follows. Monomer: Snake venom phospholipase A2 (PLA2) that shows a PLA2 activity of 578 umol/min/mg. The sequence is that of Acidic phospholipase A2 daboiatoxin A chain from Daboia siamensis (Eastern Russel's viper).